A 165-amino-acid polypeptide reads, in one-letter code: MSSTFSGDETAPFFGFLGAAAALVFSCMGAAYGTAKSGVGVASMGVMRPELVMKSIVPVVMAGVLGIYGLIIAVIISTGINPKAKSYYLFDGYAHLSSGLACGLAGLSAGMAIGIVGDAGVRANAQQPKLFVGMILILIFAEALALYGLIVGIILSSRAGQSRAD.

The Lumenal segment spans residues 1–10 (MSSTFSGDET). The helical transmembrane segment at 11 to 33 (APFFGFLGAAAALVFSCMGAAYG) threads the bilayer. Residues 34–55 (TAKSGVGVASMGVMRPELVMKS) lie on the Cytoplasmic side of the membrane. The helical transmembrane segment at 56–76 (IVPVVMAGVLGIYGLIIAVII) threads the bilayer. Topologically, residues 77 to 95 (STGINPKAKSYYLFDGYAH) are lumenal. Residues 96–117 (LSSGLACGLAGLSAGMAIGIVG) form a helical membrane-spanning segment. Topologically, residues 118-129 (DAGVRANAQQPK) are cytoplasmic. The chain crosses the membrane as a helical span at residues 130 to 155 (LFVGMILILIFAEALALYGLIVGIIL). Residues 156-165 (SSRAGQSRAD) lie on the Lumenal side of the membrane.

This sequence belongs to the V-ATPase proteolipid subunit family. As to quaternary structure, V-ATPase is a heteromultimeric enzyme composed of a peripheral catalytic V1 complex (main components: subunits A, B, C, D, E, and F) attached to an integral membrane V0 proton pore complex (main component: the proteolipid protein; which is present as a hexamer that forms the proton-conducting pore). Higher expression in leaves, followed by roots and weakly in flowers. Expression in leaves is light-dependent.

It localises to the vacuole membrane. In terms of biological role, proton-conducting pore forming subunit of the membrane integral V0 complex of vacuolar ATPase. V-ATPase is responsible for acidifying a variety of intracellular compartments in eukaryotic cells. Necessary for the crassulacean acid metabolism. The chain is V-type proton ATPase 16 kDa proteolipid subunit from Kalanchoe daigremontiana (Devil's backbone).